The primary structure comprises 1505 residues: Phosphatidylinositol 3-kinase C2 domain-containing subunit gamma (1505 aa).

A disordered region spans residues 1–32 (MAYNWQTEPNRAEPQEGGHDHQQCHHADQHLS). The segment covering 10–31 (NRAEPQEGGHDHQQCHHADQHL) has biased composition (basic and acidic residues). The PI3K-RBD domain maps to 278–370 (PSRLFADTQF…IQLHLQRSRD (93 aa)). The region spanning 540-688 (LHSHLSFTVC…TPLTLQIDFP (149 aa)) is the C2 PI3K-type domain. One can recognise a PIK helical domain in the interval 703-879 (RTDHQEPPRE…QELLAALQFC (177 aa)). Positions 948–1226 (DRDACSYFTS…KIKQSLECFP (279 aa)) constitute a PI3K/PI4K catalytic domain. The tract at residues 954-960 (YFTSNAL) is G-loop. The interval 1090–1098 (GVCDRHNDN) is catalytic loop. The tract at residues 1109-1135 (HIDFGKFLGHAQTFGGIKRDRAPFIFT) is activation loop. Positions 1259–1371 (LNKTRTIQRV…SFFLSEHIQQ (113 aa)) constitute a PX domain. One can recognise a C2 domain in the interval 1384 to 1505 (HSPDKSPQVQ…KWYPLGNSII (122 aa)).

Belongs to the PI3/PI4-kinase family. As to expression, predominantly expressed in normal liver. High levels also found in regenerating liver. Very low levels found in heart and testis.

It localises to the membrane. It carries out the reaction a 1,2-diacyl-sn-glycero-3-phospho-(1D-myo-inositol) + ATP = a 1,2-diacyl-sn-glycero-3-phospho-(1D-myo-inositol-3-phosphate) + ADP + H(+). The enzyme catalyses a 1,2-diacyl-sn-glycero-3-phospho-(1D-myo-inositol 4-phosphate) + ATP = a 1,2-diacyl-sn-glycero-3-phospho-(1D-myo-inositol-3,4-bisphosphate) + ADP + H(+). Functionally, generates phosphatidylinositol 3-phosphate (PtdIns3P) and phosphatidylinositol 3,4-bisphosphate (PtdIns(3,4)P2) that act as second messengers. May play a role in SDF1A-stimulated chemotaxis. The protein is Phosphatidylinositol 3-kinase C2 domain-containing subunit gamma (Pik3c2g) of Rattus norvegicus (Rat).